Reading from the N-terminus, the 76-residue chain is Probable insulin-like peptide alpha-type 3 (76 aa).

An N-terminal signal peptide occupies residues 1 to 18 (MFVLLIILSIILAQVTDA). 3 disulfide bridges follow: C28-C58, C40-C71, and C46-C72.

This sequence belongs to the insulin family.

Its subcellular location is the secreted. The protein is Probable insulin-like peptide alpha-type 3 (ins-23) of Caenorhabditis elegans.